We begin with the raw amino-acid sequence, 575 residues long: Suppressor of tumorigenicity 7 protein-like (575 aa).

2 helical membrane passes run 36–56 and 80–100; these read GLAG…LYAL and FYVA…IFEW. Positions 125 to 147 are disordered; sequence GTESSISEPGSPSRNRENETSRQ. Positions 126 to 137 are enriched in polar residues; it reads TESSISEPGSPS.

It belongs to the ST7 family.

The protein localises to the membrane. This Homo sapiens (Human) protein is Suppressor of tumorigenicity 7 protein-like (ST7L).